The sequence spans 863 residues: Neuroligin-1 (863 aa).

An N-terminal signal peptide occupies residues Met-1–Ser-45. The Extracellular segment spans residues Gln-46 to Ser-717. Asn-109 carries N-linked (GlcNAc...) (complex) asparagine glycosylation. The cysteines at positions 117 and 153 are disulfide-linked. The disordered stretch occupies residues Lys-183 to Pro-212. The span at Asp-194–Ile-206 shows a compositional bias: acidic residues. N-linked (GlcNAc...) (complex) asparagine glycosylation is found at Asn-323 and Asn-363. Intrachain disulfides connect Cys-362–Cys-373 and Cys-532–Cys-566. Asn-567 carries an N-linked (GlcNAc...) asparagine glycan. Residues Pro-670–Asp-708 form a disordered region. Positions Lys-681–Phe-690 are enriched in polar residues. O-linked (GalNAc...) serine glycosylation is found at Ser-703 and Ser-706. A helical membrane pass occupies residues Val-718 to Tyr-738. The Cytoplasmic portion of the chain corresponds to Tyr-739–Val-863. Residues Gly-842–Val-863 are disordered. Residues Pro-851–Val-863 are compositionally biased toward basic residues.

It belongs to the type-B carboxylesterase/lipase family. In terms of assembly, interacts with neurexins NRXN1, NRXN2 and NRXN3. Interaction with neurexins is mediated by heparan sulfate glycan modification on neurexin. Interacts with NLGN3. Interacts with AIP1 and PDZRN3. Interacts (via its C-terminus) with DLG4/PSD-95 (via PDZ domain 3). Interacts with GOPC. Expressed in the blood vessel walls (at protein level). Highly expressed in brain through prenatal stages, and at lower levels in pancreas islet beta cells.

It localises to the cell membrane. Its subcellular location is the postsynaptic density. It is found in the synaptic cleft. The protein resides in the synaptic cell membrane. Functionally, cell surface protein involved in cell-cell-interactions via its interactions with neurexin family members. Plays a role in synapse function and synaptic signal transmission, and probably mediates its effects by recruiting and clustering other synaptic proteins. May promote the initial formation of synapses, but is not essential for this. In vitro, triggers the de novo formation of presynaptic structures. May be involved in specification of excitatory synapses. Required to maintain wakefulness quality and normal synchrony of cerebral cortex activity during wakefulness and sleep. The protein is involved in nervous system development. This chain is Neuroligin-1 (NLGN1), found in Homo sapiens (Human).